The chain runs to 121 residues: Holo-[acyl-carrier-protein] synthase (121 aa).

2 residues coordinate Mg(2+): Asp8 and Glu58.

The protein belongs to the P-Pant transferase superfamily. AcpS family. Requires Mg(2+) as cofactor.

The protein localises to the cytoplasm. It carries out the reaction apo-[ACP] + CoA = holo-[ACP] + adenosine 3',5'-bisphosphate + H(+). Functionally, transfers the 4'-phosphopantetheine moiety from coenzyme A to a Ser of acyl-carrier-protein. The chain is Holo-[acyl-carrier-protein] synthase from Bacillus velezensis (strain DSM 23117 / BGSC 10A6 / LMG 26770 / FZB42) (Bacillus amyloliquefaciens subsp. plantarum).